Reading from the N-terminus, the 349-residue chain is Guanine nucleotide-binding protein alpha-13 subunit (349 aa).

A lipid anchor (N-myristoyl glycine) is attached at Gly2. Residue Cys3 is the site of S-palmitoyl cysteine attachment. Positions 35–349 constitute a G-alpha domain; it reads SHIRLLLLGS…VFKDIMKRKR (315 aa). The G1 motif stretch occupies residues 38–51; sequence RLLLLGSAESGKTT. GTP-binding positions include 43 to 50, 177 to 183, 202 to 206, 271 to 274, and Ala327; these read GSAESGKT, IMAYVPT, DIGGQ, and NEID. Residues 175 to 183 are G2 motif; sequence DLIMAYVPT. Mg(2+) is bound at residue Thr183. A G3 motif region spans residues 198 to 207; that stretch reads FQLFDIGGQK. Residues 267-274 are G4 motif; the sequence is YLFLNEID. Positions 325 to 330 are G5 motif; it reads CIAIDT.

Belongs to the G-alpha family. In terms of assembly, g proteins are composed of 3 units; alpha, beta and gamma. The alpha chain contains the guanine nucleotide binding site.

Functionally, guanine nucleotide-binding proteins (G proteins) are involved as modulators or transducers in various transmembrane signaling systems. This Caenorhabditis briggsae protein is Guanine nucleotide-binding protein alpha-13 subunit.